A 508-amino-acid polypeptide reads, in one-letter code: Glycerol kinase (508 aa).

Threonine 14 is an ADP binding site. Positions 14, 15, and 16 each coordinate ATP. Position 14 (threonine 14) interacts with sn-glycerol 3-phosphate. Arginine 18 is an ADP binding site. Sn-glycerol 3-phosphate contacts are provided by arginine 84, glutamate 85, and tyrosine 136. Glycerol-binding residues include arginine 84, glutamate 85, and tyrosine 136. Histidine 232 is subject to Phosphohistidine; by HPr. Aspartate 246 provides a ligand contact to sn-glycerol 3-phosphate. Glycerol contacts are provided by aspartate 246 and glutamine 247. ADP-binding residues include threonine 268 and glycine 311. Threonine 268, glycine 311, glutamine 315, and glycine 412 together coordinate ATP. Residues glycine 412 and asparagine 416 each contribute to the ADP site.

This sequence belongs to the FGGY kinase family. Homotetramer and homodimer (in equilibrium). In terms of processing, the phosphoenolpyruvate-dependent sugar phosphotransferase system (PTS), including enzyme I, and histidine-containing protein (HPr) are required for the phosphorylation, which leads to the activation of the enzyme.

It carries out the reaction glycerol + ATP = sn-glycerol 3-phosphate + ADP + H(+). It functions in the pathway polyol metabolism; glycerol degradation via glycerol kinase pathway; sn-glycerol 3-phosphate from glycerol: step 1/1. Activated by phosphorylation and inhibited by fructose 1,6-bisphosphate (FBP). Functionally, key enzyme in the regulation of glycerol uptake and metabolism. Catalyzes the phosphorylation of glycerol to yield sn-glycerol 3-phosphate. The chain is Glycerol kinase from Streptococcus pyogenes serotype M4 (strain MGAS10750).